Reading from the N-terminus, the 125-residue chain is Translation initiation factor 5A (125 aa).

Lysine 35 bears the Hypusine mark.

It belongs to the eIF-5A family.

It localises to the cytoplasm. Functionally, functions by promoting the formation of the first peptide bond. This Methanosphaerula palustris (strain ATCC BAA-1556 / DSM 19958 / E1-9c) protein is Translation initiation factor 5A (eIF5A).